Reading from the N-terminus, the 268-residue chain is Ribosomal RNA small subunit methyltransferase A (268 aa).

S-adenosyl-L-methionine contacts are provided by N19, L21, G46, E67, D92, and N113.

Belongs to the class I-like SAM-binding methyltransferase superfamily. rRNA adenine N(6)-methyltransferase family. RsmA subfamily.

The protein localises to the cytoplasm. The catalysed reaction is adenosine(1518)/adenosine(1519) in 16S rRNA + 4 S-adenosyl-L-methionine = N(6)-dimethyladenosine(1518)/N(6)-dimethyladenosine(1519) in 16S rRNA + 4 S-adenosyl-L-homocysteine + 4 H(+). Functionally, specifically dimethylates two adjacent adenosines (A1518 and A1519) in the loop of a conserved hairpin near the 3'-end of 16S rRNA in the 30S particle. May play a critical role in biogenesis of 30S subunits. The chain is Ribosomal RNA small subunit methyltransferase A from Tolumonas auensis (strain DSM 9187 / NBRC 110442 / TA 4).